Consider the following 814-residue polypeptide: DNA ligase (814 aa).

Residues 46–50 (DAEYD), 95–96 (SL), and Glu129 each bind NAD(+). Lys131 acts as the N6-AMP-lysine intermediate in catalysis. 4 residues coordinate NAD(+): Arg152, Glu189, Lys305, and Lys329. Zn(2+)-binding residues include Cys434, Cys437, Cys458, and Cys464. A disordered region spans residues 526–549 (SAQRRTEGEPAPKKPTKKKGEEED). The 80-residue stretch at 735 to 814 (TSAAAFAGKT…DDWLAMLAEA (80 aa)) folds into the BRCT domain.

It belongs to the NAD-dependent DNA ligase family. LigA subfamily. Requires Mg(2+) as cofactor. Mn(2+) is required as a cofactor.

The enzyme catalyses NAD(+) + (deoxyribonucleotide)n-3'-hydroxyl + 5'-phospho-(deoxyribonucleotide)m = (deoxyribonucleotide)n+m + AMP + beta-nicotinamide D-nucleotide.. Its function is as follows. DNA ligase that catalyzes the formation of phosphodiester linkages between 5'-phosphoryl and 3'-hydroxyl groups in double-stranded DNA using NAD as a coenzyme and as the energy source for the reaction. It is essential for DNA replication and repair of damaged DNA. The sequence is that of DNA ligase from Methylorubrum extorquens (strain CM4 / NCIMB 13688) (Methylobacterium extorquens).